Reading from the N-terminus, the 484-residue chain is UDP-glycosyltransferase 73B4 (484 aa).

The active-site Proton acceptor is the H18. 2 residues coordinate an anthocyanidin: H18 and N89. The Charge relay role is filled by D129. Residues A356, Q358, H373, W376, N377, S378, and E381 each contribute to the UDP-alpha-D-glucose site. A396 provides a ligand contact to an anthocyanidin. Residues E397 and Q398 each contribute to the UDP-alpha-D-glucose site.

Belongs to the UDP-glycosyltransferase family. As to expression, specifically expressed in roots.

It carries out the reaction a flavonol + UDP-alpha-D-glucose = a flavonol 3-O-beta-D-glucoside + UDP + H(+). Functionally, possesses quercetin 3-O-glucosyltransferase and low 7-O-glucosyltransferase activities in vitro. Also active in vitro on benzoates and benzoate derivatives. Can detoxify the explosive 2,4,6-trinitrotoluene in plant by forming O- or C-glucose conjugates. This is UDP-glycosyltransferase 73B4 (UGT73B4) from Arabidopsis thaliana (Mouse-ear cress).